Consider the following 635-residue polypeptide: Protein OPG056 (635 aa).

Belongs to the orthopoxvirus OPG056 family. In terms of assembly, interacts with protein OPG164/A36. Interacts with protein OPG064/E2.

Its subcellular location is the virion membrane. It localises to the host endosome. Its function is as follows. Plays a role in intracellular enveloped virus (IEV) transport to the cell surface through microtubule transport. Together with protein OPG064/E2, forms a complex that interacts with host KLC2 (kinesin light chain isoform 2) to engage the kinesin-1 complex and thereby promote IEV trafficking. The polypeptide is Protein OPG056 (OPG056) (Vaccinia virus (strain Western Reserve) (VACV)).